A 911-amino-acid polypeptide reads, in one-letter code: Chitin synthase G (911 aa).

Disordered regions lie at residues 1 to 66 and 107 to 138; these read MAYQ…VSGY and GRVASPYARSDTSSTEAWRQRQAPGGGPGGLR. Over residues 12 to 34 the composition is skewed to basic and acidic residues; the sequence is PHYDDNGHRLQDLPHGSYEEEAS. Residues 54 to 66 are compositionally biased toward polar residues; sequence QHGSSTTRPVSGY. 6 helical membrane passes run 579–599, 624–644, 659–679, 711–731, 840–860, and 879–899; these read IFSTVLTWFSLASYWLTTTVI, IINTIVKYVYLGFLLLQFILA, SFVVFGIIQVYVVIDALYLVV, IIIIALAATFGLYFVASFMYL, LVTFWIFSNAFLAVCITSDGV, and ALLWSNAVVALFRFIGACWFL.

Belongs to the chitin synthase family. Class III subfamily.

The protein resides in the cell membrane. The catalysed reaction is [(1-&gt;4)-N-acetyl-beta-D-glucosaminyl](n) + UDP-N-acetyl-alpha-D-glucosamine = [(1-&gt;4)-N-acetyl-beta-D-glucosaminyl](n+1) + UDP + H(+). Its function is as follows. Polymerizes chitin, a structural polymer of the cell wall and septum, by transferring the sugar moiety of UDP-GlcNAc to the non-reducing end of the growing chitin polymer. In Aspergillus fumigatus (strain ATCC MYA-4609 / CBS 101355 / FGSC A1100 / Af293) (Neosartorya fumigata), this protein is Chitin synthase G (chsG).